Here is a 177-residue protein sequence, read N- to C-terminus: Small ribosomal subunit protein bS16 (177 aa).

Positions 80–177 (GIIAMPANGS…AAEAPKEEAK (98 aa)) are disordered. Positions 107–122 (AAPAAAPKAEAAPAAE) are enriched in low complexity.

Belongs to the bacterial ribosomal protein bS16 family.

The polypeptide is Small ribosomal subunit protein bS16 (Pelagibacter ubique (strain HTCC1062)).